A 396-amino-acid chain; its full sequence is Pinosylvin synthase 1 (396 aa).

Position 60–63 (60–63 (KFKR)) interacts with substrate. Residue Cys-170 is part of the active site. Substrate contacts are provided by residues Leu-273 and 311-313 (GGH).

The protein belongs to the thiolase-like superfamily. Chalcone/stilbene synthases family. As to quaternary structure, homodimer.

It is found in the cytoplasm. It carries out the reaction (E)-cinnamoyl-CoA + 3 malonyl-CoA + 3 H(+) = (E)-pinosylvin + 4 CO2 + 4 CoA. The enzyme catalyses 3-phenylpropanoyl-CoA + 3 malonyl-CoA + 3 H(+) = dihydropinosylvin + 4 CO2 + 4 CoA. It participates in phytoalexin biosynthesis; pinosylvin biosynthesis. In terms of biological role, catalyzes the production of pinosylvin from cinnamoyl-CoA and malonyl-CoA, and dihydropinosylvin from dihydrocinnamoyl-CoA. The sequence is that of Pinosylvin synthase 1 from Pinus strobus (Eastern white pine).